The sequence spans 142 residues: Large ribosomal subunit protein uL13 (142 aa).

Belongs to the universal ribosomal protein uL13 family. In terms of assembly, part of the 50S ribosomal subunit.

This protein is one of the early assembly proteins of the 50S ribosomal subunit, although it is not seen to bind rRNA by itself. It is important during the early stages of 50S assembly. The protein is Large ribosomal subunit protein uL13 of Actinobacillus pleuropneumoniae serotype 5b (strain L20).